Consider the following 256-residue polypeptide: 3-isopropylmalate dehydratase small subunit 2 (256 aa).

The transit peptide at 1 to 59 (MAYSLPTFPQALPCSSTKTSSSLATFRSPFLRFNGSTSLIPSSISITSRGTSSPTIIPR) directs the protein to the chloroplast.

The protein belongs to the LeuD family. As to quaternary structure, heterodimer of the large LEUC/IIL1 subunit and the small LEUD (SSU1, SSU2 or SSU3) subunits. In terms of tissue distribution, expressed in vascular bundles of roots, cotyledons and rosette leaves. Expressed in stem vascular bundles which branche off into lateral inflorescences. Expressed in connective tissues in anthers. In young seedlings, expressed in cotyledon epidermal cells and vasculare bundles. In hypocotyls, expressed in parenchyma cells surrounding the vasculature and further peripheral cells. In seedling roots, expressed in cells along the vasculature. In roots of adult plants, expressed in cells closely associated with the stele. In flowering stalks, expressed in parenchyma cells associated with the phloem or the xylem. Expressed in the vasculature of sepals and petals.

It is found in the plastid. The protein resides in the chloroplast stroma. It carries out the reaction (2R,3S)-3-isopropylmalate = (2S)-2-isopropylmalate. The enzyme catalyses a 2-(omega-methylsulfanyl)alkylmalate = a 2-(omega-methylsulfanyl)alkylmaleate + H2O. The catalysed reaction is 2-(3-methylsulfanyl)propylmalate = 2-(2-methylsulfanyl)propylmaleate + H2O. It catalyses the reaction a 3-(omega-methylsulfanyl)alkylmalate = a 2-(omega-methylsulfanyl)alkylmaleate + H2O. It carries out the reaction 2-(2-methylsulfanyl)ethylmalate = 2-(2-methylsulfanyl)ethylmaleate + H2O. The enzyme catalyses 3-(2-methylsulfanyl)ethylmalate = 2-(2-methylsulfanyl)ethylmaleate + H2O. The catalysed reaction is 3-(3-methylsulfanyl)propylmalate = 2-(2-methylsulfanyl)propylmaleate + H2O. It functions in the pathway amino-acid biosynthesis; L-leucine biosynthesis; L-leucine from 3-methyl-2-oxobutanoate: step 2/4. In terms of biological role, catalyzes the isomerization between 2-isopropylmalate and 3-isopropylmalate, via the formation of 2-isopropylmaleate. Functions redundantly with LEUD2 in the methionine chain elongation pathway of aliphatic glucosinolate formation. This chain is 3-isopropylmalate dehydratase small subunit 2, found in Arabidopsis thaliana (Mouse-ear cress).